We begin with the raw amino-acid sequence, 248 residues long: Flagellar L-ring protein (248 aa).

A signal peptide spans 1 to 23 (MRHAFRHSVRTLGLLGLLPVLSA). Residue Cys24 is the site of N-palmitoyl cysteine attachment. Residue Cys24 is the site of S-diacylglycerol cysteine attachment.

It belongs to the FlgH family. In terms of assembly, the basal body constitutes a major portion of the flagellar organelle and consists of four rings (L,P,S, and M) mounted on a central rod.

Its subcellular location is the cell outer membrane. It is found in the bacterial flagellum basal body. Its function is as follows. Assembles around the rod to form the L-ring and probably protects the motor/basal body from shearing forces during rotation. This Gluconobacter oxydans (strain 621H) (Gluconobacter suboxydans) protein is Flagellar L-ring protein.